A 130-amino-acid polypeptide reads, in one-letter code: Small ribosomal subunit protein uS17m (130 aa).

Belongs to the universal ribosomal protein uS17 family. Component of the mitochondrial ribosome small subunit (28S) which comprises a 12S rRNA and about 30 distinct proteins.

Its subcellular location is the mitochondrion. The polypeptide is Small ribosomal subunit protein uS17m (MRPS17) (Bos taurus (Bovine)).